A 238-amino-acid chain; its full sequence is Purine nucleoside phosphorylase DeoD-type (238 aa).

His5 is a binding site for a purine D-ribonucleoside. Phosphate contacts are provided by residues Gly21, Arg25, Arg44, and 88–91 (RVGS). Residues 180–182 (EME) and 204–205 (SD) each bind a purine D-ribonucleoside. The active-site Proton donor is the Asp205.

This sequence belongs to the PNP/UDP phosphorylase family. In terms of assembly, homohexamer; trimer of homodimers.

It catalyses the reaction a purine D-ribonucleoside + phosphate = a purine nucleobase + alpha-D-ribose 1-phosphate. It carries out the reaction a purine 2'-deoxy-D-ribonucleoside + phosphate = a purine nucleobase + 2-deoxy-alpha-D-ribose 1-phosphate. Functionally, catalyzes the reversible phosphorolytic breakdown of the N-glycosidic bond in the beta-(deoxy)ribonucleoside molecules, with the formation of the corresponding free purine bases and pentose-1-phosphate. This Photorhabdus laumondii subsp. laumondii (strain DSM 15139 / CIP 105565 / TT01) (Photorhabdus luminescens subsp. laumondii) protein is Purine nucleoside phosphorylase DeoD-type.